Reading from the N-terminus, the 109-residue chain is Small ribosomal subunit protein bS6 (109 aa).

This sequence belongs to the bacterial ribosomal protein bS6 family.

Its function is as follows. Binds together with bS18 to 16S ribosomal RNA. This chain is Small ribosomal subunit protein bS6, found in Anaplasma marginale (strain St. Maries).